The chain runs to 343 residues: F17b-G fimbrial adhesin (343 aa).

The N-terminal stretch at 1 to 22 is a signal peptide; the sequence is MTNFYKVFLAVFILVCCNISHA. A receptor-binding lectin domain region spans residues 23–199; sequence VVSFIGSTEN…LNPFTLNDTV (177 aa). Residues 65–66, 110–111, and 138–141 each bind a carbohydrate; these read AN, DT, and STQG. A disulfide bridge links cysteine 75 with cysteine 132. Residues 200 to 343 are fimbrillin-binding domain; that stretch reads TSCRLLTPSA…GISTFTFSYQ (144 aa). Residues 287-307 are disordered; sequence LKFGPDSPVKGNENQWQLSTG. Over residues 298 to 307 the composition is skewed to polar residues; the sequence is NENQWQLSTG.

It belongs to the fimbrial protein family.

It is found in the fimbrium. In terms of biological role, essential fimbrial adhesion factor that mediates binding to N-acetylglucosamine-containing receptors in the host intestinal microvilli, leading to colonization of the intestinal tissue, and diarrhea or septicemia. Also confers adhesiveness to laminin and basement membranes. This Escherichia coli protein is F17b-G fimbrial adhesin (f17bG).